The chain runs to 119 residues: Large ribosomal subunit protein bL20 (119 aa).

The protein belongs to the bacterial ribosomal protein bL20 family.

Functionally, binds directly to 23S ribosomal RNA and is necessary for the in vitro assembly process of the 50S ribosomal subunit. It is not involved in the protein synthesizing functions of that subunit. The protein is Large ribosomal subunit protein bL20 of Latilactobacillus sakei subsp. sakei (strain 23K) (Lactobacillus sakei subsp. sakei).